A 537-amino-acid polypeptide reads, in one-letter code: Putative cysteine ligase BshC (537 aa).

A coiled-coil region spans residues 383 to 451; sequence MERTQKLLKQ…EVKENQDNFN (69 aa).

The protein belongs to the BshC family.

Its function is as follows. Involved in bacillithiol (BSH) biosynthesis. May catalyze the last step of the pathway, the addition of cysteine to glucosamine malate (GlcN-Mal) to generate BSH. In Staphylococcus haemolyticus (strain JCSC1435), this protein is Putative cysteine ligase BshC.